Here is a 137-residue protein sequence, read N- to C-terminus: MSQVGRVRSSHHFESVCLDAEVRVVLVALDHAGLHTLSSALNESLRPIHREELHLLHFPNSPEENLRKRPAEPSPQIHGGAPHLPWLCVEKLDLLPENHAVFLQERTAQLFEGSFFFSRSPAHSISPLLQFRWGHCP.

This is an uncharacterized protein from Homo sapiens (Human).